A 276-amino-acid polypeptide reads, in one-letter code: MELGLILMFASAFVSAKDRELEEFVEKDIKVFFSSYPAQVLGMEEDQGVLVSHSKYVNPSKYKFVTRARLVKSGERYVVIFGENNICKEGNSVVKCKEERPWDIDRKEFGYTISTDNKCITKGPDESIEMKPCVNTDDQIFGFKLADLGGCGSVESLLGSEKPKSTTTNVNIFQPESECLPSVMIKADGDVEKIEENDVHVLHKEGAHTHVIEEAGHPLYEESAPSKRRVVVSHRTKRSHLPGTRRTYLGHHHFPHHHLPHHYRNRTLFERKPVVF.

The first 16 residues, Met1–Ala16, serve as a signal peptide directing secretion. N-linked (GlcNAc...) asparagine glycosylation occurs at Asn265.

This is an uncharacterized protein from Encephalitozoon cuniculi (strain GB-M1) (Microsporidian parasite).